The chain runs to 206 residues: Small ribosomal subunit protein uS4 (206 aa).

Positions 96–157 (CRLDNVVYRM…KCRNQLRIAQ (62 aa)) constitute an S4 RNA-binding domain.

The protein belongs to the universal ribosomal protein uS4 family. In terms of assembly, part of the 30S ribosomal subunit. Contacts protein S5. The interaction surface between S4 and S5 is involved in control of translational fidelity.

In terms of biological role, one of the primary rRNA binding proteins, it binds directly to 16S rRNA where it nucleates assembly of the body of the 30S subunit. With S5 and S12 plays an important role in translational accuracy. The sequence is that of Small ribosomal subunit protein uS4 from Stutzerimonas stutzeri (strain A1501) (Pseudomonas stutzeri).